We begin with the raw amino-acid sequence, 648 residues long: Biosynthetic arginine decarboxylase (648 aa).

An N6-(pyridoxal phosphate)lysine modification is found at K109. Position 291–301 (291–301 (IDVGGGLGIDF)) interacts with substrate.

Belongs to the Orn/Lys/Arg decarboxylase class-II family. SpeA subfamily. The cofactor is Mg(2+). Requires pyridoxal 5'-phosphate as cofactor.

It carries out the reaction L-arginine + H(+) = agmatine + CO2. Its pathway is amine and polyamine biosynthesis; agmatine biosynthesis; agmatine from L-arginine: step 1/1. Functionally, catalyzes the biosynthesis of agmatine from arginine. The protein is Biosynthetic arginine decarboxylase of Prochlorococcus marinus (strain MIT 9515).